The primary structure comprises 234 residues: MTYKRVLLKLSGEALMGEKPYGIDPAIVQSIAEDVSKVVENNVQLAIVVGGGNIFRGLKGSADGMDRATADYVGMLATVMNAISLQDGLERVGVATRVQTAIEMQEIAEPYIRRRAMRHLEKGRVVVFGGGCGNPFFTTDTTAALRAAEINAEVVMKATKVDGVYDRDPNQFKEAKKYSSLSYQQVLSDEIAVMDSTAIALCKDNNIPIMVFDIFKKGNISRAVAGEPIGSLIS.

An ATP-binding site is contributed by 9-12 (KLSG). G51 serves as a coordination point for UMP. Residues G52 and R56 each coordinate ATP. Residues D71 and 132–139 (CGNPFFTT) each bind UMP. ATP-binding residues include T159, Y165, and D168.

The protein belongs to the UMP kinase family. Homohexamer.

The protein resides in the cytoplasm. It catalyses the reaction UMP + ATP = UDP + ADP. It functions in the pathway pyrimidine metabolism; CTP biosynthesis via de novo pathway; UDP from UMP (UMPK route): step 1/1. Its activity is regulated as follows. Inhibited by UTP. Catalyzes the reversible phosphorylation of UMP to UDP. This is Uridylate kinase from Prochlorococcus marinus (strain AS9601).